A 568-amino-acid polypeptide reads, in one-letter code: Sulfite reductase [NADPH] hemoprotein beta-component (568 aa).

Residues C426, C432, C471, and C475 each coordinate [4Fe-4S] cluster. Siroheme is bound at residue C475.

Belongs to the nitrite and sulfite reductase 4Fe-4S domain family. As to quaternary structure, alpha(8)-beta(8). The alpha component is a flavoprotein, the beta component is a hemoprotein. Requires siroheme as cofactor. The cofactor is [4Fe-4S] cluster.

The catalysed reaction is hydrogen sulfide + 3 NADP(+) + 3 H2O = sulfite + 3 NADPH + 4 H(+). The protein operates within sulfur metabolism; hydrogen sulfide biosynthesis; hydrogen sulfide from sulfite (NADPH route): step 1/1. Its function is as follows. Component of the sulfite reductase complex that catalyzes the 6-electron reduction of sulfite to sulfide. This is one of several activities required for the biosynthesis of L-cysteine from sulfate. The sequence is that of Sulfite reductase [NADPH] hemoprotein beta-component from Xylella fastidiosa (strain 9a5c).